The primary structure comprises 314 residues: Annexin-like protein RJ4 (314 aa).

Annexin repeat units follow at residues 10–81, 82–153, 165–236, and 240–311; these read FCAK…RWTL, DPAD…ALVT, KLAN…TAIR, and DPKK…TLLG. Ca(2+) is bound by residues Gly-25, Gly-27, and Glu-67. Ile-253, Arg-255, Gly-257, Asp-297, and Thr-298 together coordinate Ca(2+).

Belongs to the annexin (TC 1.A.31.1) family. As to expression, predominantly in developing fruit.

This Fragaria ananassa (Strawberry) protein is Annexin-like protein RJ4.